A 213-amino-acid chain; its full sequence is Kynurenine formamidase (213 aa).

Tryptophan 18 contacts substrate. Zn(2+)-binding residues include histidine 48, histidine 52, and aspartate 54. Histidine 58 (proton donor/acceptor) is an active-site residue. Residues histidine 160 and glutamate 172 each coordinate Zn(2+).

The protein belongs to the Cyclase 1 superfamily. KynB family. Homodimer. Zn(2+) is required as a cofactor.

It carries out the reaction N-formyl-L-kynurenine + H2O = L-kynurenine + formate + H(+). It participates in amino-acid degradation; L-tryptophan degradation via kynurenine pathway; L-kynurenine from L-tryptophan: step 2/2. Catalyzes the hydrolysis of N-formyl-L-kynurenine to L-kynurenine, the second step in the kynurenine pathway of tryptophan degradation. The protein is Kynurenine formamidase of Burkholderia thailandensis (strain ATCC 700388 / DSM 13276 / CCUG 48851 / CIP 106301 / E264).